The chain runs to 171 residues: 3-hydroxydecanoyl-[acyl-carrier-protein] dehydratase (171 aa).

His-70 is an active-site residue.

Belongs to the thioester dehydratase family. FabA subfamily. Homodimer.

It localises to the cytoplasm. It catalyses the reaction a (3R)-hydroxyacyl-[ACP] = a (2E)-enoyl-[ACP] + H2O. The enzyme catalyses (3R)-hydroxydecanoyl-[ACP] = (2E)-decenoyl-[ACP] + H2O. The catalysed reaction is (2E)-decenoyl-[ACP] = (3Z)-decenoyl-[ACP]. Its pathway is lipid metabolism; fatty acid biosynthesis. In terms of biological role, necessary for the introduction of cis unsaturation into fatty acids. Catalyzes the dehydration of (3R)-3-hydroxydecanoyl-ACP to E-(2)-decenoyl-ACP and then its isomerization to Z-(3)-decenoyl-ACP. Can catalyze the dehydratase reaction for beta-hydroxyacyl-ACPs with saturated chain lengths up to 16:0, being most active on intermediate chain length. This Colwellia psychrerythraea (strain 34H / ATCC BAA-681) (Vibrio psychroerythus) protein is 3-hydroxydecanoyl-[acyl-carrier-protein] dehydratase.